The following is a 185-amino-acid chain: MLTDNRKIFLIGPMGAGKSTIGRQLAQRLNLEFFDSDREIETCTGVNISWVFDVEGEVGFRNREEKIIDELTQKKSIVLATGGGSIKSHIARDHLAKRGLVIYLKTTIDKQLVRTKRDKRRPLLKSSTLFNYQNLRELLEDLAKERNPLYEEISDITVSTDEYSVKCVVNKILVLLKKNGAIYKD.

Gly15 to Thr20 serves as a coordination point for ATP. A Mg(2+)-binding site is contributed by Ser19. Positions 37, 61, and 83 each coordinate substrate. Position 121 (Arg121) interacts with ATP. Arg146 contacts substrate.

The protein belongs to the shikimate kinase family. As to quaternary structure, monomer. Requires Mg(2+) as cofactor.

It localises to the cytoplasm. The enzyme catalyses shikimate + ATP = 3-phosphoshikimate + ADP + H(+). It participates in metabolic intermediate biosynthesis; chorismate biosynthesis; chorismate from D-erythrose 4-phosphate and phosphoenolpyruvate: step 5/7. Its function is as follows. Catalyzes the specific phosphorylation of the 3-hydroxyl group of shikimic acid using ATP as a cosubstrate. The protein is Shikimate kinase of Blochmanniella floridana.